The following is a 224-amino-acid chain: Menaquinol:cytochrome c reductase cytochrome b subunit (224 aa).

A helical membrane pass occupies residues 37 to 57 (FSAFVYCFGGLTFFVTVIQVL). Residue Y42 coordinates heme b. Residue C43 coordinates heme c. Heme b is bound by residues R91, H94, H108, and R111. A run of 3 helical transmembrane segments spans residues 96–116 (WGASLVIVMMFLHTLRVFFQG), 126–146 (WIVGVLIFFVMLGLGFTGYLL), and 195–215 (IHVFFLPAALFGLMAAHFIMI). Positions 196 and 211 each coordinate heme b. Heme c-binding residues include R216 and I220. S221 is a heme b binding site.

Belongs to the cytochrome b family. The main subunits of the menaquinol:cytochrome c complex are a Rieske-type iron-sulfur protein (QcrA), a cytochrome b (QcrB) and a cytochrome c (QcrC). Heme b is required as a cofactor. Heme c serves as cofactor.

It localises to the cell membrane. In terms of biological role, component of the menaquinol:cytochrome c reductase complex. This Bacillus subtilis (strain 168) protein is Menaquinol:cytochrome c reductase cytochrome b subunit.